An 89-amino-acid chain; its full sequence is MKIANVLTLSFAAIIAASSLAVVVSPITDNSRETASSSISQSPPSQWSKKQLIEYCKKNSLKTSGSHEELVIRVQNHLRTASKKVDARP.

Positions 44–78 constitute an SAP domain; the sequence is PSQWSKKQLIEYCKKNSLKTSGSHEELVIRVQNHL.

This chain is SAP domain-containing new25 (new25), found in Schizosaccharomyces pombe (strain 972 / ATCC 24843) (Fission yeast).